We begin with the raw amino-acid sequence, 191 residues long: MREIYRQTIHLVFGVLIAFSVLIFKKQLIIPLIVSIVIGICLYFLCKRYYIPIVSDLLNLCKREKEDGKGAIYFAIGMLISLILIDDIKAVFFGILVFAVGDSLATIIGIRGKLKIKYFGKTVEGFLAFFISASLILYPFYGTYGIFVALISAFIEFVSKKIRIDDNLYLPFIVAFIINHQINICSLMNFI.

6 helical membrane passes run 4–24 (IYRQ…VLIF), 26–46 (KQLI…YFLC), 68–88 (GKGA…IDDI), 90–110 (AVFF…IIGI), 135–155 (LILY…SAFI), and 168–188 (LYLP…CSLM).

The protein resides in the cell membrane. This is an uncharacterized protein from Methanocaldococcus jannaschii (strain ATCC 43067 / DSM 2661 / JAL-1 / JCM 10045 / NBRC 100440) (Methanococcus jannaschii).